A 309-amino-acid chain; its full sequence is GTP cyclohydrolase MptA (309 aa).

This sequence belongs to the GTP cyclohydrolase IV family. Homodimer. The cofactor is Fe(2+).

The catalysed reaction is GTP + H2O = 7,8-dihydroneopterin 2',3'-cyclic phosphate + formate + diphosphate + H(+). Its pathway is cofactor biosynthesis; 5,6,7,8-tetrahydromethanopterin biosynthesis. Converts GTP to 7,8-dihydro-D-neopterin 2',3'-cyclic phosphate, the first intermediate in the biosynthesis of coenzyme methanopterin. In Haloarcula marismortui (strain ATCC 43049 / DSM 3752 / JCM 8966 / VKM B-1809) (Halobacterium marismortui), this protein is GTP cyclohydrolase MptA.